Reading from the N-terminus, the 967-residue chain is RNA polymerase-associated protein RapA (967 aa).

The Helicase ATP-binding domain occupies 163 to 333 (EVGQRHAPRV…FARLRLLDPN (171 aa)). Residue 176–183 (DEVGLGKT) participates in ATP binding. Positions 279–282 (DEAH) match the DEAH box motif. In terms of domain architecture, Helicase C-terminal spans 489–677 (RVEWLLNYLT…TCRQQHDSLK (189 aa)).

This sequence belongs to the SNF2/RAD54 helicase family. RapA subfamily. As to quaternary structure, interacts with the RNAP. Has a higher affinity for the core RNAP than for the holoenzyme. Its ATPase activity is stimulated by binding to RNAP.

Its function is as follows. Transcription regulator that activates transcription by stimulating RNA polymerase (RNAP) recycling in case of stress conditions such as supercoiled DNA or high salt concentrations. Probably acts by releasing the RNAP, when it is trapped or immobilized on tightly supercoiled DNA. Does not activate transcription on linear DNA. Probably not involved in DNA repair. The sequence is that of RNA polymerase-associated protein RapA from Pectobacterium atrosepticum (strain SCRI 1043 / ATCC BAA-672) (Erwinia carotovora subsp. atroseptica).